The following is a 76-amino-acid chain: uncharacterized protein (76 aa).

Residues F18 to I38 form a helical membrane-spanning segment.

The protein localises to the cell membrane. This is an uncharacterized protein from Escherichia coli O6:H1 (strain CFT073 / ATCC 700928 / UPEC).